The chain runs to 313 residues: Ribosomal RNA small subunit methyltransferase H (313 aa).

Residues 33-35 (AGH), D53, F82, D103, and Q110 contribute to the S-adenosyl-L-methionine site.

Belongs to the methyltransferase superfamily. RsmH family.

The protein resides in the cytoplasm. It carries out the reaction cytidine(1402) in 16S rRNA + S-adenosyl-L-methionine = N(4)-methylcytidine(1402) in 16S rRNA + S-adenosyl-L-homocysteine + H(+). Its function is as follows. Specifically methylates the N4 position of cytidine in position 1402 (C1402) of 16S rRNA. In Ruminiclostridium cellulolyticum (strain ATCC 35319 / DSM 5812 / JCM 6584 / H10) (Clostridium cellulolyticum), this protein is Ribosomal RNA small subunit methyltransferase H.